Reading from the N-terminus, the 280-residue chain is 4-diphosphocytidyl-2-C-methyl-D-erythritol kinase (280 aa).

Lys8 is a catalytic residue. 91-101 lines the ATP pocket; the sequence is PVAAGLAGGST. Asp133 is an active-site residue.

It belongs to the GHMP kinase family. IspE subfamily.

It carries out the reaction 4-CDP-2-C-methyl-D-erythritol + ATP = 4-CDP-2-C-methyl-D-erythritol 2-phosphate + ADP + H(+). The protein operates within isoprenoid biosynthesis; isopentenyl diphosphate biosynthesis via DXP pathway; isopentenyl diphosphate from 1-deoxy-D-xylulose 5-phosphate: step 3/6. In terms of biological role, catalyzes the phosphorylation of the position 2 hydroxy group of 4-diphosphocytidyl-2C-methyl-D-erythritol. The chain is 4-diphosphocytidyl-2-C-methyl-D-erythritol kinase from Clostridium botulinum (strain Loch Maree / Type A3).